An 83-amino-acid chain; its full sequence is Short neurotoxin 3FTx-Oxy3 (83 aa).

Residues 1 to 21 (MKTLLLTLVVVTIVCLDLGYT) form the signal peptide. 4 disulfides stabilise this stretch: C24-C45, C38-C62, C64-C75, and C76-C81.

The protein belongs to the three-finger toxin family. Short-chain subfamily. Type I alpha-neurotoxin sub-subfamily. In terms of tissue distribution, expressed by the venom gland.

It localises to the secreted. Binds to muscle nicotinic acetylcholine receptor (nAChR) and inhibit acetylcholine from binding to the receptor, thereby impairing neuromuscular transmission. The sequence is that of Short neurotoxin 3FTx-Oxy3 from Oxyuranus microlepidotus (Inland taipan).